We begin with the raw amino-acid sequence, 468 residues long: Cysteine--tRNA ligase (468 aa).

Cys-29 contacts Zn(2+). The 'HIGH' region motif lies at 31-41 (PTVYNYIHIGN). Zn(2+) contacts are provided by Cys-209, His-234, and Glu-238. The 'KMSKS' region signature appears at 266–270 (KMSKS). Lys-269 lines the ATP pocket. Phosphoserine is present on Ser-270.

Belongs to the class-I aminoacyl-tRNA synthetase family. Monomer. The cofactor is Zn(2+).

The protein localises to the cytoplasm. It carries out the reaction tRNA(Cys) + L-cysteine + ATP = L-cysteinyl-tRNA(Cys) + AMP + diphosphate. The polypeptide is Cysteine--tRNA ligase (Oceanobacillus iheyensis (strain DSM 14371 / CIP 107618 / JCM 11309 / KCTC 3954 / HTE831)).